The following is an 82-amino-acid chain: uncharacterized protein (82 aa).

This is an uncharacterized protein from Archaeoglobus fulgidus (strain ATCC 49558 / DSM 4304 / JCM 9628 / NBRC 100126 / VC-16).